The primary structure comprises 551 residues: E-selectin (551 aa).

The signal sequence occupies residues 1–23 (MVASWLLSTLTFALVLLIKETST). Positions 24–141 (WTYHFSAENM…CSKKKLALCY (118 aa)) constitute a C-type lectin domain. Over 24–495 (WTYHFSAENM…CEEPIASNVP (472 aa)) the chain is Extracellular. N-linked (GlcNAc...) asparagine glycans are attached at residues Asn32 and Asn45. 17 disulfides stabilise this stretch: Cys42–Cys140, Cys113–Cys132, Cys145–Cys156, Cys150–Cys165, Cys167–Cys176, Cys182–Cys226, Cys195–Cys208, Cys212–Cys239, Cys244–Cys288, Cys257–Cys270, Cys274–Cys301, Cys306–Cys351, Cys337–Cys364, Cys369–Cys414, Cys400–Cys427, Cys432–Cys473, and Cys459–Cys486. The Ca(2+) site is built by Glu103, Asn105, and Glu111. Residues 103 to 111 (EPNNKQNNE), 115 to 120 (EIYIKR), and 128 to 130 (NDE) contribute to the a carbohydrate site. Residues Asn128 and Asp129 each coordinate Ca(2+). Positions 142-177 (TAACTEASCSGHGECIETINNYSCKCYPGFSGLKCE) constitute an EGF-like domain. Asn162 is a glycosylation site (N-linked (GlcNAc...) asparagine). Sushi domains lie at 180 to 241 (VTCE…TCKV), 242 to 303 (VECD…TCKA), 305 to 366 (SCDT…VCEA), 368 to 429 (KCDP…SCQV), and 430 to 488 (VQCP…TCEE). 3 N-linked (GlcNAc...) asparagine glycosylation sites follow: Asn194, Asn201, and Asn205. Residue Asn267 is glycosylated (N-linked (GlcNAc...) asparagine). Residues Asn314, Asn321, and Asn334 are each glycosylated (N-linked (GlcNAc...) asparagine). 2 N-linked (GlcNAc...) asparagine glycosylation sites follow: Asn442 and Asn466. The chain crosses the membrane as a helical span at residues 496–517 (LAVGLSVSGTSFLTLTSFLLWF). Residues 518-551 (LKYFRKKAKKFVPASSRYVGLEAHGNCQVPSHLI) lie on the Cytoplasmic side of the membrane.

It belongs to the selectin/LECAM family. In terms of assembly, interacts with SELPLG/PSGL1 and PODXL2 through the sialyl Lewis X epitope. SELPLG sulfation appears not to be required for this interaction.

It is found in the cell membrane. In terms of biological role, cell-surface glycoprotein having a role in immunoadhesion. Mediates in the adhesion of blood neutrophils in cytokine-activated endothelium through interaction with SELPLG/PSGL1. May have a role in capillary morphogenesis. This chain is E-selectin (SELE), found in Oryctolagus cuniculus (Rabbit).